The chain runs to 569 residues: AP-4 complex accessory subunit Tepsin (569 aa).

The ENTH domain maps to 8–141 (RDRLSFLHRL…FSDALPQPPS (134 aa)). Positions 196–298 (VRPGPDNPCT…SGASREPGDL (103 aa)) are disordered. The segment covering 219–229 (VTPSASHTHPN) has biased composition (polar residues). Over residues 260–292 (SSPSSQNSSCTSNLSRASDSVSRSGSDSHSGAS) the composition is skewed to low complexity. A Phosphoserine modification is found at Ser400. The interval 467–524 (VPRSPVPTPSPDTLPPALQDPGELRTQLVCSSEPGTGSEQRLENTDTPKDSSSPCPWS) is disordered. Over residues 470–480 (SPVPTPSPDTL) the composition is skewed to pro residues. Positions 494 to 505 (LVCSSEPGTGSE) are enriched in polar residues. The span at 506-515 (QRLENTDTPK) shows a compositional bias: basic and acidic residues. Residues 525-535 (PNSLFAGMELV) are interaction with AP4B1. The interval 559-569 (SEPSAFAFLNM) is interaction with AP4E1.

In terms of assembly, interacts with AP4B1 and AP4E1; the interaction is direct and mediates the association of TEPSIN with the adapter-like complex 4 (AP-4), a heterotetramer composed of AP4B1, AP4E1, AP4M1 and AP4S1.

Its subcellular location is the golgi apparatus. The protein resides in the trans-Golgi network membrane. It localises to the cytoplasmic vesicle. It is found in the cytoplasm. The protein localises to the cytosol. In terms of biological role, associates with the adapter-like complex 4 (AP-4) and may therefore play a role in vesicular trafficking of proteins at the trans-Golgi network. The sequence is that of AP-4 complex accessory subunit Tepsin from Rattus norvegicus (Rat).